Reading from the N-terminus, the 103-residue chain is Large ribosomal subunit protein uL23 (103 aa).

It belongs to the universal ribosomal protein uL23 family. Part of the 50S ribosomal subunit. Contacts protein L29, and trigger factor when it is bound to the ribosome.

Its function is as follows. One of the early assembly proteins it binds 23S rRNA. One of the proteins that surrounds the polypeptide exit tunnel on the outside of the ribosome. Forms the main docking site for trigger factor binding to the ribosome. The protein is Large ribosomal subunit protein uL23 of Pelodictyon phaeoclathratiforme (strain DSM 5477 / BU-1).